A 200-amino-acid chain; its full sequence is Interferon lambda-1 (200 aa).

The first 19 residues, 1–19 (MAAAWTVVLVTLVLGLAVA), serve as a signal peptide directing secretion. The N-linked (GlcNAc...) asparagine glycan is linked to Asn65. Cysteines 68 and 164 form a disulfide.

Belongs to the lambda interferon family.

It is found in the secreted. Functionally, cytokine with antiviral, antitumour and immunomodulatory activities. Plays a critical role in the antiviral host defense, predominantly in the epithelial tissues. Acts as a ligand for the heterodimeric class II cytokine receptor composed of IL10RB and IFNLR1, and receptor engagement leads to the activation of the JAK/STAT signaling pathway resulting in the expression of IFN-stimulated genes (ISG), which mediate the antiviral state. Has a restricted receptor distribution and therefore restricted targets: is primarily active in epithelial cells and this cell type-selective action is because of the epithelial cell-specific expression of its receptor IFNLR1. Exerts an immunomodulatory effect by up-regulating MHC class I antigen expression. The protein is Interferon lambda-1 (IFNL1) of Homo sapiens (Human).